The primary structure comprises 375 residues: Phytanoyl-CoA hydroxylase-interacting protein-like (375 aa).

Phosphoserine is present on residues Ser-11, Ser-12, and Ser-15. Asn-22 is a glycosylation site (N-linked (GlcNAc...) asparagine). Ser-24 is modified (phosphoserine). Residue Asn-36 is glycosylated (N-linked (GlcNAc...) asparagine). Residues 51-160 enclose the Fibronectin type-III domain; sequence VPHNIKINNI…EIIEFCTADY (110 aa).

This sequence belongs to the PHYHIP family.

May play a role in the development of the central system. The polypeptide is Phytanoyl-CoA hydroxylase-interacting protein-like (Phyhipl) (Mus musculus (Mouse)).